We begin with the raw amino-acid sequence, 184 residues long: Elongation factor P (184 aa).

Belongs to the elongation factor P family.

It localises to the cytoplasm. It functions in the pathway protein biosynthesis; polypeptide chain elongation. In terms of biological role, involved in peptide bond synthesis. Stimulates efficient translation and peptide-bond synthesis on native or reconstituted 70S ribosomes in vitro. Probably functions indirectly by altering the affinity of the ribosome for aminoacyl-tRNA, thus increasing their reactivity as acceptors for peptidyl transferase. The sequence is that of Elongation factor P from Thermus thermophilus (strain ATCC BAA-163 / DSM 7039 / HB27).